A 219-amino-acid polypeptide reads, in one-letter code: Interleukin-12 subunit alpha (219 aa).

The first 22 residues, 1-22 (MCPARSLLLVATLVLLDYLSLA), serve as a signal peptide directing secretion. Asn-24, Asn-93, and Asn-107 each carry an N-linked (GlcNAc...) asparagine glycan. Disulfide bonds link Cys-37–Cys-110, Cys-64–Cys-196, and Cys-85–Cys-123.

Belongs to the IL-6 superfamily. As to quaternary structure, heterodimer with IL12B; disulfide-linked. This heterodimer is known as interleukin IL-12. Heterodimer with EBI3/IL27B; not disulfide-linked. This heterodimer is known as interleukin IL-35. Interacts with NBR1; this interaction promotes IL-12 secretion.

The protein localises to the secreted. Its function is as follows. Heterodimerizes with IL12B to form the IL-12 cytokine or with EBI3/IL27B to form the IL-35 cytokine. IL-12 is primarily produced by professional antigen-presenting cells (APCs) such as B-cells and dendritic cells (DCs) as well as macrophages and granulocytes and regulates T-cell and natural killer-cell responses, induces the production of interferon-gamma (IFN-gamma), favors the differentiation of T-helper 1 (Th1) cells and is an important link between innate resistance and adaptive immunity. Mechanistically, exerts its biological effects through a receptor composed of IL12R1 and IL12R2 subunits. Binding to the receptor results in the rapid tyrosine phosphorylation of a number of cellular substrates including the JAK family kinases TYK2 and JAK2. In turn, recruited STAT4 gets phosphorylated and translocates to the nucleus where it regulates cytokine/growth factor responsive genes. As part of IL-35, plays essential roles in maintaining the immune homeostasis of the liver microenvironment and also functions as an immune-suppressive cytokine. Mediates biological events through unconventional receptors composed of IL12RB2 and gp130/IL6ST heterodimers or homodimers. Signaling requires the transcription factors STAT1 and STAT4, which form a unique heterodimer that binds to distinct DNA sites. This Cercocebus atys (Sooty mangabey) protein is Interleukin-12 subunit alpha (IL12A).